The following is a 656-amino-acid chain: Translation factor GUF1, mitochondrial (656 aa).

Residues Met1–Arg28 constitute a mitochondrion transit peptide. Residues Glu55–Asp235 form the tr-type G domain. GTP is bound by residues Ala64–Ser71, Asp128–His132, and Asn182–Asp185.

This sequence belongs to the TRAFAC class translation factor GTPase superfamily. Classic translation factor GTPase family. LepA subfamily.

It localises to the mitochondrion inner membrane. It carries out the reaction GTP + H2O = GDP + phosphate + H(+). In terms of biological role, promotes mitochondrial protein synthesis. May act as a fidelity factor of the translation reaction, by catalyzing a one-codon backward translocation of tRNAs on improperly translocated ribosomes. Binds to mitochondrial ribosomes in a GTP-dependent manner. The sequence is that of Translation factor GUF1, mitochondrial from Yarrowia lipolytica (strain CLIB 122 / E 150) (Yeast).